The chain runs to 471 residues: 5-hydroxytryptamine receptor 2B (471 aa).

Residues 1 to 26 lie on the Extracellular side of the membrane; the sequence is MFQAAVGPLQTNISLPEETPGLELNW. Residue Asn12 is glycosylated (N-linked (GlcNAc...) asparagine). A helical membrane pass occupies residues 27 to 49; it reads AALLIVMVIIPTIGGNILVILAV. Over 50–60 the chain is Cytoplasmic; it reads WLEKKLQNATN. A helical transmembrane segment spans residues 61 to 83; the sequence is FFLMSLAVADLLVGLLVMPIALI. The Extracellular portion of the chain corresponds to 84–99; it reads TILYDSDWPLPEPLCP. Cys98 and Cys182 are disulfide-bonded. The helical transmembrane segment at 100-121 threads the bilayer; it reads IWLFLDVLFSTASIMHLCAISL. The ergotamine site is built by Asp105 and Thr110. Positions 122–124 match the DRY motif; important for ligand-induced conformation changes motif; that stretch reads DRY. Topologically, residues 122 to 141 are cytoplasmic; that stretch reads DRYIAIKKPIQHSQYKSRAK. Residues 142 to 162 form a helical membrane-spanning segment; it reads VMLKIALVWLISICIAIPIPI. Topologically, residues 163–191 are extracellular; sequence KGLRNYPHPNNITFTSNHTCVLKTDTFQE. 2 N-linked (GlcNAc...) asparagine glycosylation sites follow: Asn173 and Asn179. Leu184 serves as a coordination point for ergotamine. The [DE]RFG motif; may stabilize a conformation that preferentially activates signaling via beta-arrestin family members motif lies at 187-190; sequence DTFQ. The helical transmembrane segment at 192 to 214 threads the bilayer; sequence FIIFGSLVAFFIPLTIMMIIYFL. The Cytoplasmic segment spans residues 215-308; that stretch reads TVRVLRKKVY…TLTNEQRASK (94 aa). A helical transmembrane segment spans residues 309–329; the sequence is VLGIVFLLFVVMWCPFFITNI. At 330–344 the chain is on the extracellular side; that stretch reads TSALCGPCDANIIGR. A disulfide bridge connects residues Cys334 and Cys337. Residues 345 to 366 traverse the membrane as a helical segment; it reads LMEIFSWVGYVSSGINPLVYTL. The short motif at 360 to 364 is the NPxxY motif; important for ligand-induced conformation changes and signaling element; that stretch reads NPLVY. Residues 367 to 471 lie on the Cytoplasmic side of the membrane; it reads FNKTFRQAFT…CKQEERVSCV (105 aa). Cys381 carries S-palmitoyl cysteine lipidation. The PDZ-binding signature appears at 469 to 471; sequence SCV.

The protein belongs to the G-protein coupled receptor 1 family. As to expression, detected in brain, heart and gut.

It is found in the cell membrane. The protein localises to the synapse. It localises to the synaptosome. G-protein coupled receptor for 5-hydroxytryptamine (serotonin). Also functions as a receptor for various ergot alkaloid derivatives and psychoactive substances. Ligand binding causes a conformation change that triggers signaling via guanine nucleotide-binding proteins (G proteins) and modulates the activity of downstream effectors. HTR2B is coupled to G(q)/G(11) G alpha proteins and activates phospholipase C-beta, releasing diacylglycerol (DAG) and inositol 1,4,5-trisphosphate (IP3) second messengers that modulate the activity of phosphatidylinositol 3-kinase and promote the release of Ca(2+) ions from intracellular stores, respectively. Beta-arrestin family members inhibit signaling via G proteins and mediate activation of alternative signaling pathways. Plays a role in the regulation of dopamine and 5-hydroxytryptamine release, 5-hydroxytryptamine uptake and in the regulation of extracellular dopamine and 5-hydroxytryptamine levels, and thereby affects neural activity. In Dichotomyctere fluviatilis (Green pufferfish), this protein is 5-hydroxytryptamine receptor 2B (htr2b).